A 253-amino-acid polypeptide reads, in one-letter code: Indole-3-glycerol phosphate synthase (253 aa).

It belongs to the TrpC family.

It carries out the reaction 1-(2-carboxyphenylamino)-1-deoxy-D-ribulose 5-phosphate + H(+) = (1S,2R)-1-C-(indol-3-yl)glycerol 3-phosphate + CO2 + H2O. The protein operates within amino-acid biosynthesis; L-tryptophan biosynthesis; L-tryptophan from chorismate: step 4/5. The sequence is that of Indole-3-glycerol phosphate synthase from Bacillus cereus (strain B4264).